The following is a 129-amino-acid chain: Class I hydrophobin 11 (129 aa).

The signal sequence occupies residues 1–19 (MRLTPLLAALALPLLTVLA). Intrachain disulfides connect Cys48–Cys106, Cys55–Cys100, Cys56–Cys89, and Cys107–Cys122.

Belongs to the fungal hydrophobin family. As to quaternary structure, self-assembles to form functional amyloid fibrils called rodlets. Self-assembly into fibrillar rodlets occurs spontaneously at hydrophobic:hydrophilic interfaces and the rodlets further associate laterally to form amphipathic monolayers.

It localises to the secreted. The protein resides in the cell wall. In terms of biological role, aerial growth, conidiation, and dispersal of filamentous fungi in the environment rely upon a capability of their secreting small amphipathic proteins called hydrophobins (HPBs) with low sequence identity. Class I can self-assemble into an outermost layer of rodlet bundles on aerial cell surfaces, conferring cellular hydrophobicity that supports fungal growth, development and dispersal; whereas Class II form highly ordered films at water-air interfaces through intermolecular interactions but contribute nothing to the rodlet structure. The sequence is that of Class I hydrophobin 11 from Pleurotus ostreatus (strain PC15) (Oyster mushroom).